Here is a 359-residue protein sequence, read N- to C-terminus: DNA replication and repair protein RecF (359 aa).

Residue 30–37 participates in ATP binding; that stretch reads GNNGSGKT.

Belongs to the RecF family.

The protein localises to the cytoplasm. In terms of biological role, the RecF protein is involved in DNA metabolism; it is required for DNA replication and normal SOS inducibility. RecF binds preferentially to single-stranded, linear DNA. It also seems to bind ATP. This is DNA replication and repair protein RecF from Haemophilus influenzae (strain 86-028NP).